Reading from the N-terminus, the 339-residue chain is Glycerol-3-phosphate dehydrogenase [NAD(P)+] (339 aa).

Residues serine 15, tyrosine 16, histidine 36, and lysine 110 each coordinate NADPH. Sn-glycerol 3-phosphate is bound by residues lysine 110, glycine 139, and threonine 141. Alanine 143 is a binding site for NADPH. 5 residues coordinate sn-glycerol 3-phosphate: lysine 195, aspartate 248, serine 258, arginine 259, and asparagine 260. Catalysis depends on lysine 195, which acts as the Proton acceptor. Arginine 259 serves as a coordination point for NADPH. NADPH-binding residues include valine 283 and glutamate 285.

This sequence belongs to the NAD-dependent glycerol-3-phosphate dehydrogenase family.

The protein resides in the cytoplasm. It catalyses the reaction sn-glycerol 3-phosphate + NAD(+) = dihydroxyacetone phosphate + NADH + H(+). It carries out the reaction sn-glycerol 3-phosphate + NADP(+) = dihydroxyacetone phosphate + NADPH + H(+). The protein operates within membrane lipid metabolism; glycerophospholipid metabolism. Functionally, catalyzes the reduction of the glycolytic intermediate dihydroxyacetone phosphate (DHAP) to sn-glycerol 3-phosphate (G3P), the key precursor for phospholipid synthesis. The polypeptide is Glycerol-3-phosphate dehydrogenase [NAD(P)+] (Pectobacterium atrosepticum (strain SCRI 1043 / ATCC BAA-672) (Erwinia carotovora subsp. atroseptica)).